The primary structure comprises 1121 residues: Linoleate 10R-lipoxygenase (1121 aa).

Residues 1–66 (MLRRFSSTFK…NEKKGNSVSP (66 aa)) form a disordered region. The span at 22–36 (TASSSSAAVANTNNN) shows a compositional bias: low complexity. Residues 50-61 (SSSDDDRNEKKG) show a composition bias toward basic and acidic residues. The active-site Proton acceptor is His253. Residues Asp254, Ser269, Tyr271, Asp273, and Ser275 each contribute to the Ca(2+) site.

It belongs to the peroxidase family.

The catalysed reaction is (9Z,12Z)-octadecadienoate + O2 = (8E,10R,12Z)-10-hydroperoxyoctadeca-8,12-dienoate. Functionally, responsible for the synthesis of various fatty acid-derived oxylipins. Oxidizes linoleic acid primarily to 10R-hydroperoxy-8,12-octadecadienoic acid (10R-HPODE) and, to a lesser extent, 8R-hydroperoxylinoleic acid (8R-HPODE). Also synthesizes 10-hydroxy-octadeca-8,12-dienoic acid (10-HODE) from linoleic acid and primarily 8R-hydroxy-octadeca-9-monoenoic acid (8-HOME, also known as psiB beta) from oleic acid. 8-HOME forms part of psi factor, a mixture of oxylipins that regulates the balance between sexual and asexual spore production. Displays epoxyalcohol synthase activity. Plays a role in the synthesis of prostaglandins which may be required for pathogenicity. The chain is Linoleate 10R-lipoxygenase from Aspergillus fumigatus (strain ATCC MYA-4609 / CBS 101355 / FGSC A1100 / Af293) (Neosartorya fumigata).